The chain runs to 323 residues: MHKYQTHWVEHSIVKILSSTGKKHIALMAGGMSAEREVSLVSSEGVSKALIELGYRVTFIDMGADIAVRLQEIKPDIVFNCLHGTYGEDGCLPGLLNIMRIPYTHSGVLSSALAFNKIHSRIWFLTNNINMAESIVVNKSDNIKNDPMKRPYVIKPLAQGSSIGVEVIFAEDDFNFADYDFPYGDQVIIEQYIKGQGRELQVAVLNGKALGALEIKLLKNRFYDYETKYTEGFADHLCPAPLPANLYEKLLIESEKIYKTMNCKGPARAEFILEEQTNKLYALEINTHPGMMPLSIVPEIAAYAGINFTNLIEEIIKTASFES.

Residues 121–317 (RIWFLTNNIN…FTNLIEEIIK (197 aa)) form the ATP-grasp domain. 147–199 (PMKRPYVIKPLAQGSSIGVEVIFAEDDFNFADYDFPYGDQVIIEQYIKGQGRE) is an ATP binding site. Residues Glu-270, Glu-284, and Asn-286 each coordinate Mg(2+).

This sequence belongs to the D-alanine--D-alanine ligase family. Requires Mg(2+) as cofactor. The cofactor is Mn(2+).

The protein localises to the cytoplasm. The enzyme catalyses 2 D-alanine + ATP = D-alanyl-D-alanine + ADP + phosphate + H(+). Its pathway is cell wall biogenesis; peptidoglycan biosynthesis. Cell wall formation. The protein is D-alanine--D-alanine ligase of Rickettsia peacockii (strain Rustic).